Consider the following 360-residue polypeptide: Archaemetzincin-2 (360 aa).

Histidine 254 provides a ligand contact to Zn(2+). Glutamate 255 (proton acceptor) is an active-site residue. Residues histidine 258, histidine 264, cysteine 265, cysteine 270, cysteine 289, and cysteine 292 each coordinate Zn(2+).

It belongs to the peptidase M54 family. Zn(2+) is required as a cofactor.

Its function is as follows. Probable zinc metalloprotease. The protein is Archaemetzincin-2 (AMZ2) of Macaca fascicularis (Crab-eating macaque).